We begin with the raw amino-acid sequence, 146 residues long: MIF-like protein mif-3 (146 aa).

It belongs to the MIF family.

In Caenorhabditis elegans, this protein is MIF-like protein mif-3 (mif-3).